The chain runs to 490 residues: Keratin, type II cytoskeletal 8 (490 aa).

Over residues 1–27 (MSIRVTQKSYKMSTSGPRAFSSRSFTS) the composition is skewed to polar residues. Positions 1-48 (MSIRVTQKSYKMSTSGPRAFSSRSFTSGPGARISSSSFSRVGSSSSSF) are disordered. The interval 1–96 (MSIRVTQKSY…DPNIQAVRTQ (96 aa)) is head. The residue at position 9 (serine 9) is a Phosphoserine; by PKC/PRKCE. Residue lysine 11 forms a Glycyl lysine isopeptide (Lys-Gly) (interchain with G-Cter in SUMO2) linkage. Residues serine 13, serine 15, serine 21, and serine 22 each carry the phosphoserine modification. Residue arginine 23 is modified to Omega-N-methylarginine. At serine 24 the chain carries Phosphoserine; by PKC/PRKCE. At threonine 26 the chain carries Phosphothreonine. Serine 27 is subject to Phosphoserine. Position 32 is an omega-N-methylarginine (arginine 32). A phosphoserine mark is found at serine 34, serine 37, and serine 39. Over residues 34–48 (SSSSFSRVGSSSSSF) the composition is skewed to low complexity. Omega-N-methylarginine is present on arginine 40. Phosphoserine occurs at positions 43, 44, and 47. At arginine 49 the chain carries Asymmetric dimethylarginine; alternate. Residue arginine 49 is modified to Omega-N-methylarginine; alternate. A Phosphoserine modification is found at serine 51. Residue serine 80 is modified to Phosphoserine; by MAPK. The coil 1A stretch occupies residues 97–132 (EKEQIKSLNNKFASFIDKVRFLEQQNKMLETKWSLL). In terms of domain architecture, IF rod spans 97-408 (EKEQIKSLNN…KLLEGEESRL (312 aa)). Lysine 107 carries the N6-malonyllysine modification. Residues lysine 128 and lysine 136 each participate in a glycyl lysine isopeptide (Lys-Gly) (interchain with G-Cter in SUMO2) cross-link. The tract at residues 133-149 (QQQKTSRSNMDNMFESY) is linker 1. Residues 150–241 (INNLRRQLEA…QIHEEEIREL (92 aa)) form a coil 1B region. Lysine 203 is covalently cross-linked (Glycyl lysine isopeptide (Lys-Gly) (interchain with G-Cter in SUMO1); alternate). Residue lysine 203 forms a Glycyl lysine isopeptide (Lys-Gly) (interchain with G-Cter in SUMO2); alternate linkage. Lysine 213 bears the N6-acetyllysine mark. A linker 12 region spans residues 242–265 (QSQISDTSVVLSMDNSRSLDMDGI). 2 positions are modified to phosphoserine: serine 259 and serine 280. Residues 266-403 (IAEVRAQYED…ITTYRKLLEG (138 aa)) are coil 2. Residues 267–387 (AEVRAQYEDI…REYQELMNVK (121 aa)) form a necessary for interaction with PNN region. Lysine 291 participates in a covalent cross-link: Glycyl lysine isopeptide (Lys-Gly) (interchain with G-Cter in SUMO2). A Glycyl lysine isopeptide (Lys-Gly) (interchain with G-Cter in SUMO2); alternate cross-link involves residue lysine 301. Lysine 301 is subject to N6-acetyllysine; alternate. Residue lysine 310 forms a Glycyl lysine isopeptide (Lys-Gly) (interchain with G-Cter in SUMO2) linkage. Residue lysine 331 forms a Glycyl lysine isopeptide (Lys-Gly) (interchain with G-Cter in SUMO2); alternate linkage. Lysine 331 is modified (N6-acetyllysine; alternate). Phosphoserine is present on serine 336. Lysine 399 is covalently cross-linked (Glycyl lysine isopeptide (Lys-Gly) (interchain with G-Cter in SUMO2)). The tract at residues 404-490 (EESRLESGMQ…VSESSDVVSK (87 aa)) is tail. Residues serine 406, serine 410, serine 416, serine 423, serine 430, serine 432, and serine 438 each carry the phosphoserine modification. Residue lysine 479 forms a Glycyl lysine isopeptide (Lys-Gly) (interchain with G-Cter in SUMO1); alternate linkage. Lysine 479 participates in a covalent cross-link: Glycyl lysine isopeptide (Lys-Gly) (interchain with G-Cter in SUMO2); alternate. 4 positions are modified to phosphoserine: serine 482, serine 484, serine 485, and serine 489.

The protein belongs to the intermediate filament family. As to quaternary structure, heterotetramer of two type I and two type II keratins. Forms a heterodimer with KRT18. Associates with KRT20. Interacts with PLEC isoform 1C, when in a heterodimer with KRT18. Interacts with PNN. When associated with KRT19, interacts with DMD. Interacts with TCHP. Interacts with APEX1. Interacts with GPER1. Interacts with EPPK1. Interacts with PKP1 and PKP2. Post-translationally, phosphorylation on serine residues is enhanced during EGF stimulation and mitosis. Ser-80 phosphorylation plays an important role in keratin filament reorganization. In terms of processing, O-glycosylated. O-GlcNAcylation at multiple sites increases solubility, and decreases stability by inducing proteasomal degradation. O-glycosylated (O-GlcNAcylated), in a cell cycle-dependent manner. Expressed in abundance in the epithelia of colon, bladder, ileum, and stomach, with lower expression observed in earskin (at protein level). Also expressed in pancreas, liver, dudenum and jejunum.

Its subcellular location is the cytoplasm. The protein resides in the nucleus. It localises to the nucleoplasm. It is found in the nucleus matrix. In terms of biological role, together with KRT19, helps to link the contractile apparatus to dystrophin at the costameres of striated muscle. The polypeptide is Keratin, type II cytoskeletal 8 (Krt8) (Mus musculus (Mouse)).